An 872-amino-acid polypeptide reads, in one-letter code: Tetratricopeptide repeat protein 16 (872 aa).

The segment at methionine 1–proline 20 is disordered. 8 TPR repeats span residues valine 61–leucine 94, aspartate 96–asparagine 128, threonine 136–lysine 169, alanine 251–aspartate 284, proline 285–aspartate 318, leucine 331–glutamate 364, lysine 365–aspartate 398, and glycine 406–lysine 439. 2 disordered regions span residues alanine 557–threonine 640 and threonine 653–leucine 872. Residues lysine 577–glutamate 590 show a composition bias toward acidic residues. Residues glutamate 591 to proline 604 are compositionally biased toward basic and acidic residues. 4 stretches are compositionally biased toward polar residues: residues lysine 610–threonine 640, threonine 653–glutamate 675, glycine 689–lysine 709, and lysine 721–proline 754. The segment covering lysine 762 to arginine 783 has biased composition (basic residues). Polar residues-rich tracts occupy residues arginine 799 to threonine 827 and glycine 839 to glutamate 861.

The sequence is that of Tetratricopeptide repeat protein 16 (TTC16) from Macaca fascicularis (Crab-eating macaque).